Here is a 122-residue protein sequence, read N- to C-terminus: Large ribosomal subunit protein uL14c (122 aa).

It belongs to the universal ribosomal protein uL14 family. In terms of assembly, part of the 50S ribosomal subunit.

The protein resides in the plastid. It localises to the chloroplast. Functionally, binds to 23S rRNA. This is Large ribosomal subunit protein uL14c from Vitis vinifera (Grape).